The following is a 142-amino-acid chain: Hemoglobin subunit alpha-1 (142 aa).

Residues 2-142 form the Globin domain; it reads LLSADDKKHI…VSTVLTSKYR (141 aa). H59 is a binding site for O2. H88 is a heme b binding site.

Belongs to the globin family. In terms of assembly, heterotetramer of two alpha chains and two beta chains. As to expression, red blood cells.

Functionally, involved in oxygen transport from the lung to the various peripheral tissues. The chain is Hemoglobin subunit alpha-1 (hba1) from Xenopus laevis (African clawed frog).